The chain runs to 62 residues: uncharacterized protein (62 aa).

4Fe-4S ferredoxin-type domains lie at 2-31 and 32-62; these read AVTIDYSLCKGAECAECVNNCPMEVFEIEG and DKVVVARPDDCTYCGVCEDVCPTGAVKVEPE. Residues Cys-10, Cys-15, Cys-18, Cys-22, Cys-42, Cys-45, Cys-48, and Cys-52 each coordinate [4Fe-4S] cluster.

It depends on [4Fe-4S] cluster as a cofactor.

This is an uncharacterized protein from Methanocaldococcus jannaschii (strain ATCC 43067 / DSM 2661 / JAL-1 / JCM 10045 / NBRC 100440) (Methanococcus jannaschii).